A 458-amino-acid polypeptide reads, in one-letter code: Exodeoxyribonuclease 7 large subunit (458 aa).

It belongs to the XseA family. Heterooligomer composed of large and small subunits.

The protein resides in the cytoplasm. It catalyses the reaction Exonucleolytic cleavage in either 5'- to 3'- or 3'- to 5'-direction to yield nucleoside 5'-phosphates.. Bidirectionally degrades single-stranded DNA into large acid-insoluble oligonucleotides, which are then degraded further into small acid-soluble oligonucleotides. This chain is Exodeoxyribonuclease 7 large subunit, found in Escherichia coli (strain UTI89 / UPEC).